A 149-amino-acid polypeptide reads, in one-letter code: D-aminoacyl-tRNA deacylase (149 aa).

Residues 137–138 carry the Gly-cisPro motif, important for rejection of L-amino acids motif; that stretch reads GP.

It belongs to the DTD family. Homodimer.

The protein resides in the cytoplasm. The catalysed reaction is glycyl-tRNA(Ala) + H2O = tRNA(Ala) + glycine + H(+). It carries out the reaction a D-aminoacyl-tRNA + H2O = a tRNA + a D-alpha-amino acid + H(+). Its function is as follows. An aminoacyl-tRNA editing enzyme that deacylates mischarged D-aminoacyl-tRNAs. Also deacylates mischarged glycyl-tRNA(Ala), protecting cells against glycine mischarging by AlaRS. Acts via tRNA-based rather than protein-based catalysis; rejects L-amino acids rather than detecting D-amino acids in the active site. By recycling D-aminoacyl-tRNA to D-amino acids and free tRNA molecules, this enzyme counteracts the toxicity associated with the formation of D-aminoacyl-tRNA entities in vivo and helps enforce protein L-homochirality. The polypeptide is D-aminoacyl-tRNA deacylase (Koribacter versatilis (strain Ellin345)).